Here is a 166-residue protein sequence, read N- to C-terminus: MSDRVCVGAVAGAFGVRGELRIKSFCAVPEDIASYNPLSFEDGRETTLRLTGQIKNGLSGRLTGVSNKEAADALRGARLYAPRDRLPRLPDDEFYHADLIGLAVHDTGGTLLGKVAAVHNHGAGDLLELRGPGLKGSVLLPFTRAVVPTVDLDAGRIVADPPEGLF.

The region spanning 91–165 is the PRC barrel domain; it reads DDEFYHADLI…RIVADPPEGL (75 aa).

Belongs to the RimM family. As to quaternary structure, binds ribosomal protein uS19.

It localises to the cytoplasm. Its function is as follows. An accessory protein needed during the final step in the assembly of 30S ribosomal subunit, possibly for assembly of the head region. Essential for efficient processing of 16S rRNA. May be needed both before and after RbfA during the maturation of 16S rRNA. It has affinity for free ribosomal 30S subunits but not for 70S ribosomes. This Dinoroseobacter shibae (strain DSM 16493 / NCIMB 14021 / DFL 12) protein is Ribosome maturation factor RimM.